A 216-amino-acid polypeptide reads, in one-letter code: Cytidylate kinase (216 aa).

7–15 provides a ligand contact to ATP; it reads GPSGTGKST.

Belongs to the cytidylate kinase family. Type 1 subfamily.

Its subcellular location is the cytoplasm. The catalysed reaction is CMP + ATP = CDP + ADP. The enzyme catalyses dCMP + ATP = dCDP + ADP. The protein is Cytidylate kinase of Chlamydia trachomatis serovar A (strain ATCC VR-571B / DSM 19440 / HAR-13).